A 356-amino-acid polypeptide reads, in one-letter code: S-adenosylmethionine:tRNA ribosyltransferase-isomerase (356 aa).

It belongs to the QueA family. In terms of assembly, monomer.

The protein resides in the cytoplasm. It catalyses the reaction 7-aminomethyl-7-carbaguanosine(34) in tRNA + S-adenosyl-L-methionine = epoxyqueuosine(34) in tRNA + adenine + L-methionine + 2 H(+). Its pathway is tRNA modification; tRNA-queuosine biosynthesis. In terms of biological role, transfers and isomerizes the ribose moiety from AdoMet to the 7-aminomethyl group of 7-deazaguanine (preQ1-tRNA) to give epoxyqueuosine (oQ-tRNA). This chain is S-adenosylmethionine:tRNA ribosyltransferase-isomerase, found in Xanthomonas axonopodis pv. citri (strain 306).